We begin with the raw amino-acid sequence, 198 residues long: Type II secretion system protein J (198 aa).

A propeptide spans Met-1–Gly-7 (leader sequence). An N-methylphenylalanine modification is found at Phe-8. The chain crosses the membrane as a helical span at residues Phe-8–Val-28.

It belongs to the GSP J family. As to quaternary structure, type II secretion is composed of four main components: the outer membrane complex, the inner membrane complex, the cytoplasmic secretion ATPase and the periplasm-spanning pseudopilus. Interacts with core component PulG. Cleaved by prepilin peptidase. In terms of processing, methylated by prepilin peptidase at the amino group of the N-terminal phenylalanine once the leader sequence is cleaved by prepilin peptidase.

It is found in the cell inner membrane. Component of the type II secretion system required for the energy-dependent secretion of extracellular factors such as proteases and toxins from the periplasm. Part of the pseudopilus tip complex that is critical for the recognition and binding of secretion substrates. The chain is Type II secretion system protein J (pulJ) from Klebsiella pneumoniae.